The sequence spans 465 residues: Protein Loquacious (465 aa).

The tract at residues 1–337 (MDQENFHGSS…DSICGELEGE (337 aa)) is necessary for enhancing pre-miRNA processing by Dcr-1. Residues 1–379 (MDQENFHGSS…TLKNATGKKL (379 aa)) are not required for interaction with Dcr-1. The interval 1 to 392 (MDQENFHGSS…QKTCLKNNKI (392 aa)) is important for homodimerization and interaction with Dcr-1. The sufficient for binding RNA stretch occupies residues 129–211 (NGLAMKTPVS…DKLIGAQLPE (83 aa)). Residues 129 to 322 (NGLAMKTPVS…WMRLQETPID (194 aa)) are necessary for promoting preferential binding of Dcr-2 to the less stably base paired ends of siRNAs. Positions 135–206 (TPVSILQELL…ARALIDKLIG (72 aa)) constitute a DRBM 1 domain. The segment at 209 to 249 (LPESPSSSAGPSVTGLTVAGSGGDGNANATGGGDASDKTVG) is enables simultaneous binding of both DRBM 1 and 2 domains to dsRNA. Residues 210–246 (PESPSSSAGPSVTGLTVAGSGGDGNANATGGGDASDK) are disordered. Positions 211–223 (ESPSSSAGPSVTG) are enriched in polar residues. The necessary and sufficient for enhancing processing of pre-miRNAs by Dcr-1 stretch occupies residues 220-465 (SVTGLTVAGS…LEYLKIMTKK (246 aa)). A compositionally biased stretch (gly residues) spans 228–242 (GSGGDGNANATGGGD). The interval 245–322 (DKTVGNPIGW…WMRLQETPID (78 aa)) is sufficient for binding RNA. Positions 250-318 (NPIGWLQEMC…AHRMWMRLQE (69 aa)) constitute a DRBM 2 domain. The interval 308 to 309 (AA) is necessary for binding pre-miRNA. The segment at 338–359 (PRSSENYYGELKDISVPTLTTQ) is required for binding to Dcr-2 and to fully enhance Dcr-2 mediated cleavage of 3' overhanging termini (3'ovr) and blunt termini (BLT) dsRNAs. However, this region is dispensable for binding the dsRNA substrates. The necessary for interaction with Dcr-1 stretch occupies residues 340 to 465 (SSENYYGELK…LEYLKIMTKK (126 aa)). The tract at residues 392-463 (IDYIKLLGEI…NALEYLKIMT (72 aa)) is sufficent for binding to Dcr-1. The 69-residue stretch at 393-461 (DYIKLLGEIA…AQNALEYLKI (69 aa)) folds into the DRBM 3 domain.

Homodimer. As to quaternary structure, interacts with dicer enzyme Dcr-1. In terms of assembly, component of the miRNA-directed RNA-induced loading complex (miRLC), composed of at least Dcr-1, AGO1 and loqs isoform PB (loqs-PB), which processes pre-miRNAs and loads the resulting miRNAs into the Argonaute 1 (AGO1)-containing RNA-induced silencing complex (miRISC) to target the selective destruction of homologous RNAs. Interacts (via DRBM 3 domain) with dicer enzyme Dcr-1 (via helicase domain). Different regions of the Dcr-1-loqs-PB heterodimer collaborate to recognize, bind and position the pre-miRNA for Dcr-1 mediated cleavage. In the absence of miRNA substrates, the heterodimer favors a closed, catalytically incompetent, conformation, whereas binding of authentic pre-miRNA substrates stabilizes the relatively rare open, catalytically competent, conformation of the heterodimer. During substrate recognition, the Dcr-1 PAZ domain and pre-miRNA interact with the DRBM 1 domain of loqs-PB, which likely contributes to substrate recognition and stabilization. At the miRNA binding stage, the Dcr-1 DRBM domain and the loqs-PB DRBM domains then bind the pre-miRNA in tandem to form a tight 'belt' around the pre-miRNA stem, the pre-miRNA loop is docked in the loop-binding region formed by DUF283, DRBM and part of the helicase domain of Dcr-1, and the loqs-PB DRBM 1 and the wing domain of Dcr-1 act together to bind the 5' and 3' pre-miRNA termini within the PAZ and platform domains of Dcr-1. These interactions between the proteins and their pre-miRNA substrate stabilize a distorted form of the pre-miRNA and position the scissile phosphodiester bonds of the pre-miRNA at the RNase III catalytic cleavage sites of Dcr-1. Following Dcr-1 mediated cleavage, the miRNA duplex remains bound to loqs-PB DRBM 1, which dissociates from the Dcr-1 RNase III 1 domain but remains in contact with the PAZ and wing domains suggesting that the heterodimer presents the mature miRNA to AGO2 for loading into the RNA-induced silencing complex (miRISC). Able to interact with dicer enzyme Dcr-1. However, the relevance of such an interaction is unclear in vivo and another report found that it did not interact with Dcr-1. As to quaternary structure, monomer. Interacts (via C-terminus) with dicer enzyme Dcr-2 (via N-terminus); interaction is required for RNAi activity in producing siRNAs from a subset of endo- and exo-dsRNAs, and in the alternative siRLC, the interaction enhances the binding preference of the protein for the thermodynamically more stable ends of endogenous siRNAs. Interaction with Dcr-2 is RNA independent, however the isoform must bind both dsRNA and Dcr-2 to enhance Dcr-2 cleavage activity. Does not interact with Dcr-1. Strong expression in males and females. Expression in ovaries is relatively weak. As to expression, strong expression in females and relatively weak expression in males. Strong expression in ovaries.

The protein resides in the cytoplasm. The protein localises to the cytosol. Its function is as follows. Double-stranded RNA-binding protein which can function in gene silencing by acting with Dcr-1 to enhance its ATP-independent processing of a specific subset of precursor micro-RNAs (pre-miRNAs) to mature miRNAs. Some reports found it was able to enhance the efficiency of pre-miRNA processing by Dcr-1, and can shift the cleavage site of Dcr-1 altering the length of the mature miRNAs produced by Dcr-1 alone. However, in contrast to isoform PB, it is not necessary or sufficient for enhancing miRNA biogenesis, and is not required for development or female germline stem cell (GSC) maintenance. Another report also found that it decreases binding of Dcr-1 to the miRNA substrate let-7. In terms of biological role, double-stranded RNA-binding protein which functions in gene silencing by acting with Dcr-1 to enhance its ATP-independent processing of a specific subset of precursor micro-RNAs (pre-miRNAs) to mature miRNAs. Function is essential for development and female germline stem cell (GSC) maintenance. Functions in miRNA-mediated gene silencing by enhancing the binding affinity and specific pre-miRNA processing activity of Dcr-1, and as part of the loqs-PB-Dcr-1 complex, is involved in substrate discrimination, correctly positioning the pre-miRNA in the Dcr-1 catalytic center for cleavage, and miRNA loading into the Argonaute 1 (Ago1)-containing RNA-induced silencing complex (miRISC). Increases the binding affinity of Dcr-1 to pre-miRNAs, thereby increasing dicing efficiency and broadening the range of substrates that can be processed by the dicer. It may also confer the substrate specificity of Dcr-1 towards pre-miRNAs, as in its absence Dcr-1 displays siRNA-generating activity towards long dsRNA substrates. It can also shift the cleavage site of Dcr-1 for a small number of pre-miRNAs, changing the length of the mature miRNAs produced by Dcr-1 alone. Increases the range of pre-miRNAs that can be processed by Dcr-1, by enhancing the dicing of suboptimal hairpin substrates including ones with mismatches at the dicing site. This function may also promote the generation of novel miRNA genes as it appears to have an important role in processing evolutionarily young miRNA genes, suggesting that it may also enhance dicing of substrates that have not acquired hairpin features required for efficient miRNA processing. As newly emerged miRNAs can have deleterious or beneficial effects on fitness, this function is likely part of a regulatory system that prevents excessive emergence of active miRNA genes and thus keeps them within an optimal range. Also forms a RISC loading complex (miRLC) with Dcr-1 to mediate Ago1-loading of mature miRNAs into the RNA-induced silencing complex (miRISC). In female ovaries, required for Dcr-1 to generate the twenty-three nucleotide isomiR variant of miR-307a which is able to repress its targets Gk2 and tara. Functionally, double-stranded RNA-binding protein which has an essential role in gene silencing (RNAi) by acting with Dcr-2 to enhance its ATP-dependent processing of a subset of endogenous (endo) and exogenous (exo) dsRNAs into short interfering RNAs (siRNAs). Functions in RNAi by increasing the initial binding affinity of Dcr-2 to certain dsRNA substrates, and in the absence of r2d2, may also function in siRNA loading into the Argonaute 2 (AGO2)-containing RNA-induced silencing complex (siRISC) and guide strand selection for target silencing by the siRISC. Promotes Dcr-2 cleavage of a subset of dsRNAs, including endo-dsRNAs derived from convergent transcription, inverted repeats and transposons. Also enables Dcr-2 to produce hairpin-derived endo-siRNAs in the presence of cellular inhibitory inorganic phosphate, likely by increasing the binding affinity of the enzyme to the hairpin dsRNAs allowing the dsRNA to displace phosphate bound to Dcr-2. According to many reports, the cleavage reaction mode of Dcr-2 changes according to the termini of the dsRNA substrate, with the enzyme displaying a preference for processing blunt termini (BLT), likely non-self dsRNAs, over dsRNAs with 2 nucleotides 3' overhanging (3'ovr) termini, which are typically the structure of endo-dsRNAs. According to many reports, interaction with Loqs-PD modifies the molecular recognition mechanisms of Dcr-2 towards sub-optimal 3'ovr dsRNA substrates and thus enables the dicer to cleave endo-dsRNA templates with diverse termini. However, according to another report, the mode of cleavage reaction is not affected by the presence or absence of loqs-PD. In the absence of r2d2, may also form an alternative RISC loading complex (siRLC) with Dcr-2 to mediate AGO2-loading of endo- and exo-siRNAs into the RNA-induced silencing complex (siRISC). Many reports suggest that loqs-PD and r2d2 function independently with dcr-2 in distinct siRNA pathways, and may even compete for binding to the enzyme. Loaded siRNAs serve as a guide to direct the siRISC to complementary RNAs to degrade them or prevent their translation. The siRLC plays an important role in the ATP-dependent asymmetry sensing of the duplex, and is therefore also responsible for the selection of the strand that ultimately acts as the guide siRNA for the siRISC. Thermodynamically asymmetric endo-siRNAs can be pre-oriented in the siRLC by the Loqs-PD and DCr-2 complex, which preferentially binds to the most thermodynamically stable strand prior to loading into the siRISC. Appears to be involved in promoting double-strand breaks (DSBs) following exposure to a low-dose/dose-rate (LDR) of ionizing radiation. This is Protein Loquacious from Drosophila melanogaster (Fruit fly).